The primary structure comprises 126 residues: Large ribosomal subunit protein uL24 (126 aa).

A disordered region spans residues methionine 1 to serine 23.

This sequence belongs to the universal ribosomal protein uL24 family. Component of the large ribosomal subunit (LSU). Mature yeast ribosomes consist of a small (40S) and a large (60S) subunit. The 40S small subunit contains 1 molecule of ribosomal RNA (18S rRNA) and at least 33 different proteins. The large 60S subunit contains 3 rRNA molecules (25S, 5.8S and 5S rRNA) and at least 46 different proteins.

The protein localises to the cytoplasm. The protein resides in the nucleus. Its subcellular location is the nucleolus. In terms of biological role, component of the ribosome, a large ribonucleoprotein complex responsible for the synthesis of proteins in the cell. The small ribosomal subunit (SSU) binds messenger RNAs (mRNAs) and translates the encoded message by selecting cognate aminoacyl-transfer RNA (tRNA) molecules. The large subunit (LSU) contains the ribosomal catalytic site termed the peptidyl transferase center (PTC), which catalyzes the formation of peptide bonds, thereby polymerizing the amino acids delivered by tRNAs into a polypeptide chain. The nascent polypeptides leave the ribosome through a tunnel in the LSU and interact with protein factors that function in enzymatic processing, targeting, and the membrane insertion of nascent chains at the exit of the ribosomal tunnel. The sequence is that of Large ribosomal subunit protein uL24 (rpl26) from Schizosaccharomyces pombe (strain 972 / ATCC 24843) (Fission yeast).